The chain runs to 722 residues: G2-specific protein kinase fin1 (722 aa).

One can recognise a Protein kinase domain in the interval 4 to 281; that stretch reads YKILECIGHG…TYQLLRSPIL (278 aa). ATP contacts are provided by residues 10–18 and Lys-33; that span reads IGHGSFGRI. Asp-151 serves as the catalytic Proton acceptor. A disordered region spans residues 528-557; the sequence is LSVESDETAVSASSGESVPTDSTLTDTKSK. The segment covering 535-546 has biased composition (polar residues); sequence TAVSASSGESVP.

It belongs to the protein kinase superfamily. Ser/Thr protein kinase family. NIMA subfamily.

It localises to the cytoplasm. Its subcellular location is the cytoskeleton. The protein localises to the microtubule organizing center. The protein resides in the spindle pole body. It carries out the reaction L-seryl-[protein] + ATP = O-phospho-L-seryl-[protein] + ADP + H(+). It catalyses the reaction L-threonyl-[protein] + ATP = O-phospho-L-threonyl-[protein] + ADP + H(+). In terms of biological role, promotes chromosome condensation and nuclear envelope dynamics during mitosis. Activity appears at metaphase-anaphase transition. This Schizosaccharomyces pombe (strain 972 / ATCC 24843) (Fission yeast) protein is G2-specific protein kinase fin1 (fin1).